A 384-amino-acid chain; its full sequence is MTVTLGMPTAPARPLGTRRHSRQIHVGNVLVGGDAPVSVQSMCTTLTSDVNATLQQIAQLTASGCQIVRVAVPSQDDADALAAIARKSPIPVIADIHFQPKYVFAAIDAGCAAVRVNPGNIKAFDDKVGEIARAAKAAGVPIRIGVNAGSLDKRLLAKYGKATPEALTESALWECSLFEEHDFRDIKISVKHHDPVVMIQAYRLLAQACDYPLHLGVTEAGPSFQGTVKSAVAFGALLAEGIGDTIRVSLSAPPVEEVKVGTAILESLGLRQRKLEIVSCPSCGRAQVDVYTLANQVSAGLEGMEVPLRVAVMGCVVNGPGEAREADLGVASGNGKGQIFVRGEVVKTVPEAQIVETLIEEAMRLAEEMAADGTPSGEPSVSVG.

Residues cysteine 280, cysteine 283, cysteine 315, and glutamate 322 each contribute to the [4Fe-4S] cluster site.

It belongs to the IspG family. The cofactor is [4Fe-4S] cluster.

It catalyses the reaction (2E)-4-hydroxy-3-methylbut-2-enyl diphosphate + oxidized [flavodoxin] + H2O + 2 H(+) = 2-C-methyl-D-erythritol 2,4-cyclic diphosphate + reduced [flavodoxin]. Its pathway is isoprenoid biosynthesis; isopentenyl diphosphate biosynthesis via DXP pathway; isopentenyl diphosphate from 1-deoxy-D-xylulose 5-phosphate: step 5/6. In terms of biological role, converts 2C-methyl-D-erythritol 2,4-cyclodiphosphate (ME-2,4cPP) into 1-hydroxy-2-methyl-2-(E)-butenyl 4-diphosphate. The chain is 4-hydroxy-3-methylbut-2-en-1-yl diphosphate synthase (flavodoxin) from Frankia casuarinae (strain DSM 45818 / CECT 9043 / HFP020203 / CcI3).